Here is a 325-residue protein sequence, read N- to C-terminus: Large ribosomal subunit protein uL1m (325 aa).

Residues 1–50 constitute a mitochondrion transit peptide; the sequence is MAAAVRCMGRALIHHQRHSLSKMVYQTSLCSCSVNIRVPNRHFAAATKSA.

Belongs to the universal ribosomal protein uL1 family. In terms of assembly, component of the mitochondrial large ribosomal subunit (mt-LSU). Mature mammalian 55S mitochondrial ribosomes consist of a small (28S) and a large (39S) subunit. The 28S small subunit contains a 12S ribosomal RNA (12S mt-rRNA) and 30 different proteins. The 39S large subunit contains a 16S rRNA (16S mt-rRNA), a copy of mitochondrial valine transfer RNA (mt-tRNA(Val)), which plays an integral structural role, and 52 different proteins.

The protein resides in the mitochondrion. The chain is Large ribosomal subunit protein uL1m (MRPL1) from Homo sapiens (Human).